Reading from the N-terminus, the 359-residue chain is Endoglucanase (359 aa).

A signal peptide spans M1–A23. E53 serves as the catalytic Proton donor. D110 acts as the Nucleophile in catalysis.

Belongs to the glycosyl hydrolase 8 (cellulase D) family.

It catalyses the reaction Endohydrolysis of (1-&gt;4)-beta-D-glucosidic linkages in cellulose, lichenin and cereal beta-D-glucans.. The biological conversion of cellulose to glucose generally requires three types of hydrolytic enzymes: (1) Endoglucanases which cut internal beta-1,4-glucosidic bonds; (2) Exocellobiohydrolases that cut the disaccharide cellobiose from the non-reducing end of the cellulose polymer chain; (3) Beta-1,4-glucosidases which hydrolyze the cellobiose and other short cello-oligosaccharides to glucose. The polypeptide is Endoglucanase (Cellulomonas uda).